A 123-amino-acid polypeptide reads, in one-letter code: Putative membrane protein insertion efficiency factor (123 aa).

Residues 1 to 23 (MGSCGGKHTGKGAPKPYSRNFTD) are disordered.

It belongs to the UPF0161 family.

It localises to the cell inner membrane. Its function is as follows. Could be involved in insertion of integral membrane proteins into the membrane. In Brucella abortus (strain 2308), this protein is Putative membrane protein insertion efficiency factor.